The sequence spans 131 residues: L-ectoine synthase (131 aa).

This sequence belongs to the ectoine synthase family.

It carries out the reaction (2S)-4-acetamido-2-aminobutanoate = L-ectoine + H2O. Its pathway is amine and polyamine biosynthesis; ectoine biosynthesis; L-ectoine from L-aspartate 4-semialdehyde: step 3/3. Functionally, catalyzes the circularization of gamma-N-acetyl-alpha,gamma-diaminobutyric acid (ADABA) to ectoine (1,4,5,6-tetrahydro-2-methyl-4-pyrimidine carboxylic acid), which is an excellent osmoprotectant. The polypeptide is L-ectoine synthase (Wolinella succinogenes (strain ATCC 29543 / DSM 1740 / CCUG 13145 / JCM 31913 / LMG 7466 / NCTC 11488 / FDC 602W) (Vibrio succinogenes)).